The sequence spans 238 residues: Cysteine-rich venom protein pseudechetoxin-like (238 aa).

Residues 1–19 (MIAFTVLLSLAAVLQQSSG) form the signal peptide. A propeptide spanning residues 20 to 28 (TVDFASESS) is cleaved from the precursor. One can recognise an SCP domain in the interval 38 to 164 (VDKHNDLRRS…STKYLYVCQY (127 aa)). Disulfide bonds link cysteine 75-cysteine 153, cysteine 92-cysteine 165, cysteine 148-cysteine 162, cysteine 184-cysteine 191, cysteine 187-cysteine 196, cysteine 200-cysteine 233, cysteine 209-cysteine 227, and cysteine 218-cysteine 231. One can recognise a ShKT domain in the interval 200–233 (CKHNNDFSNCKALAKKSKCQTEWIKSKCPATCFC).

It belongs to the CRISP family. Expressed by the venom gland.

It is found in the secreted. In terms of biological role, blocks olfactory (CNGA2) and retinal (CNGA1) CNG channel currents. Does not affect neither depolarization- nor caffeine-induced contraction of smooth muscle. This Oxyuranus scutellatus scutellatus (Australian taipan) protein is Cysteine-rich venom protein pseudechetoxin-like.